Here is a 446-residue protein sequence, read N- to C-terminus: Phosphoglucosamine mutase (446 aa).

Serine 102 serves as the catalytic Phosphoserine intermediate. Mg(2+) contacts are provided by serine 102, aspartate 241, aspartate 243, and aspartate 245. Position 102 is a phosphoserine (serine 102).

Belongs to the phosphohexose mutase family. Requires Mg(2+) as cofactor. In terms of processing, activated by phosphorylation.

It carries out the reaction alpha-D-glucosamine 1-phosphate = D-glucosamine 6-phosphate. Functionally, catalyzes the conversion of glucosamine-6-phosphate to glucosamine-1-phosphate. This chain is Phosphoglucosamine mutase, found in Idiomarina loihiensis (strain ATCC BAA-735 / DSM 15497 / L2-TR).